Consider the following 260-residue polypeptide: Proteasome subunit alpha (260 aa).

The segment at 231-260 (LLPEDFSPGQTEGGGDPAPESGDSKDAKDN) is disordered.

Belongs to the peptidase T1A family. In terms of assembly, the 20S proteasome core is composed of 14 alpha and 14 beta subunits that assemble into four stacked heptameric rings, resulting in a barrel-shaped structure. The two inner rings, each composed of seven catalytic beta subunits, are sandwiched by two outer rings, each composed of seven alpha subunits. The catalytic chamber with the active sites is on the inside of the barrel. Has a gated structure, the ends of the cylinder being occluded by the N-termini of the alpha-subunits. Is capped by the proteasome-associated ATPase, ARC.

The protein localises to the cytoplasm. The protein operates within protein degradation; proteasomal Pup-dependent pathway. With respect to regulation, the formation of the proteasomal ATPase ARC-20S proteasome complex, likely via the docking of the C-termini of ARC into the intersubunit pockets in the alpha-rings, may trigger opening of the gate for substrate entry. Interconversion between the open-gate and close-gate conformations leads to a dynamic regulation of the 20S proteasome proteolysis activity. Functionally, component of the proteasome core, a large protease complex with broad specificity involved in protein degradation. The chain is Proteasome subunit alpha from Mycobacteroides abscessus (strain ATCC 19977 / DSM 44196 / CCUG 20993 / CIP 104536 / JCM 13569 / NCTC 13031 / TMC 1543 / L948) (Mycobacterium abscessus).